The following is a 398-amino-acid chain: Protein-glutamate methylesterase/protein-glutamine glutaminase (398 aa).

Residues 4-121 (KVLVVDDSSF…ATNKDDAILL (118 aa)) enclose the Response regulatory domain. Asp55 bears the 4-aspartylphosphate mark. The segment at 133–200 (RMYRSSSLTP…SANPTTSSIS (68 aa)) is disordered. Polar residues-rich tracts occupy residues 136-146 (RSSSLTPTSTI) and 168-200 (RLAS…SSIS). One can recognise a CheB-type methylesterase domain in the interval 205–398 (SGKQYKLLLI…EAILKESSRG (194 aa)). Catalysis depends on residues Ser217, His244, and Asp340.

This sequence belongs to the CheB family. Phosphorylated by CheA. Phosphorylation of the N-terminal regulatory domain activates the methylesterase activity.

The protein localises to the cytoplasm. The catalysed reaction is [protein]-L-glutamate 5-O-methyl ester + H2O = L-glutamyl-[protein] + methanol + H(+). It catalyses the reaction L-glutaminyl-[protein] + H2O = L-glutamyl-[protein] + NH4(+). Functionally, involved in chemotaxis. Part of a chemotaxis signal transduction system that modulates chemotaxis in response to various stimuli. Catalyzes the demethylation of specific methylglutamate residues introduced into the chemoreceptors (methyl-accepting chemotaxis proteins or MCP) by CheR. Also mediates the irreversible deamidation of specific glutamine residues to glutamic acid. The chain is Protein-glutamate methylesterase/protein-glutamine glutaminase from Shewanella frigidimarina (strain NCIMB 400).